A 509-amino-acid chain; its full sequence is tRNA-2-methylthio-N(6)-dimethylallyladenosine synthase (509 aa).

The interval 1 to 21 is disordered; that stretch reads MNEKQRIESGQVNPSDKKSEK. Positions 66–184 constitute an MTTase N-terminal domain; it reads RKFYIRTYGC…LPELLSEAYL (119 aa). Residues cysteine 75, cysteine 111, cysteine 145, cysteine 221, cysteine 225, and cysteine 228 each contribute to the [4Fe-4S] cluster site. The Radical SAM core domain occupies 207-437; the sequence is RTGKIKGWVN…NEVVNEISAK (231 aa). One can recognise a TRAM domain in the interval 440 to 503; it reads KEYEGQVVEV…TWSLDGEMVG (64 aa).

This sequence belongs to the methylthiotransferase family. MiaB subfamily. Monomer. It depends on [4Fe-4S] cluster as a cofactor.

It localises to the cytoplasm. The catalysed reaction is N(6)-dimethylallyladenosine(37) in tRNA + (sulfur carrier)-SH + AH2 + 2 S-adenosyl-L-methionine = 2-methylsulfanyl-N(6)-dimethylallyladenosine(37) in tRNA + (sulfur carrier)-H + 5'-deoxyadenosine + L-methionine + A + S-adenosyl-L-homocysteine + 2 H(+). Its function is as follows. Catalyzes the methylthiolation of N6-(dimethylallyl)adenosine (i(6)A), leading to the formation of 2-methylthio-N6-(dimethylallyl)adenosine (ms(2)i(6)A) at position 37 in tRNAs that read codons beginning with uridine. This chain is tRNA-2-methylthio-N(6)-dimethylallyladenosine synthase, found in Bacillus licheniformis (strain ATCC 14580 / DSM 13 / JCM 2505 / CCUG 7422 / NBRC 12200 / NCIMB 9375 / NCTC 10341 / NRRL NRS-1264 / Gibson 46).